A 727-amino-acid chain; its full sequence is Platelet endothelial cell adhesion molecule (727 aa).

An N-terminal signal peptide occupies residues 1–17; sequence MLLALGLTLVLYASLQA. At 18–590 the chain is on the extracellular side; sequence EENSFTINSI…VRVFLAPWKK (573 aa). Ig-like C2-type domains lie at 40-126, 135-213, 225-309, 315-391, 413-472, and 488-578; these read GQQL…PKVT, GGVV…PIRS, PKFE…IMVN, PKPK…LVPI, GHAI…NCHS, and PVDE…RSST. An intrachain disulfide couples Cys47 to Cys99. 2 N-linked (GlcNAc...) asparagine glycosylation sites follow: Asn74 and Asn141. 2 disulfides stabilise this stretch: Cys142–Cys195 and Cys245–Cys293. N-linked (GlcNAc...) asparagine glycans are attached at residues Asn309, Asn345, Asn360, Asn424, and Asn540. Cystine bridges form between Cys336–Cys375, Cys420–Cys465, and Cys512–Cys561. A helical transmembrane segment spans residues 591-609; it reads GLIAVVVIGVVIATLIVAA. Residues 610 to 727 are Cytoplasmic-facing; the sequence is KCYFLRKAKA…SRTEGSLNGT (118 aa). Cys611 carries the S-palmitoyl cysteine lipid modification. The tract at residues 642 to 672 is disordered; it reads SEPSVEANSHYGYDDVSGNDAVKPINQNKDP. 2 consecutive short sequence motifs (ITIM motif) follow at residues 677–682 and 700–705; these read VEYTEV and TVYSEI. Phosphotyrosine; by FER occurs at positions 679 and 702. Residues 698–718 are membrane-bound segment which detaches upon phosphorylation; it reads TETVYSEIRKVDPNLMENRYS. The tract at residues 710 to 727 is may play a role in cytoprotective signaling; sequence PNLMENRYSRTEGSLNGT. Phosphoserine occurs at positions 718 and 723.

In terms of assembly, trans-homodimer (via Ig-like C2-type 1 and Ig-like C2-type 2 domains); trans-homodimerization is required for cell-cell interaction. Forms a complex with BDKRB2 and GNAQ. Interacts with BDKRB2 and GNAQ. Interacts with PTPN11; Tyr-702 is critical for PTPN11 recruitment. Interacts with FER. Interacts with CD177; the interaction is Ca(2+)-dependent; the interaction is direct. Phosphorylated on Ser and Tyr residues by src kinases after cellular activation. Upon activation, phosphorylated on Ser-718 which probably initiates the dissociation of the membrane-interaction segment (residues 698-718) from the cell membrane allowing the sequential phosphorylation of Tyr-702 and Tyr-679. Constitutively phosphorylated on Ser-723 in resting platelets. Phosphorylated on tyrosine residues by FER and FES in response to FCER1 activation. In endothelial cells Fyn mediates mechanical-force (stretch or pull) induced tyrosine phosphorylation. Post-translationally, palmitoylation by ZDHHC21 is necessary for cell surface expression in endothelial cells and enrichment in membrane rafts. Expressed in lung and platelets (at protein level).

The protein localises to the cell membrane. Its subcellular location is the membrane raft. The protein resides in the cell junction. Its function is as follows. Cell adhesion molecule which is required for leukocyte transendothelial migration (TEM) under most inflammatory conditions. Tyr-679 plays a critical role in TEM and is required for efficient trafficking of PECAM1 to and from the lateral border recycling compartment (LBRC) and is also essential for the LBRC membrane to be targeted around migrating leukocytes. Trans-homophilic interaction may play a role in endothelial cell-cell adhesion via cell junctions. Heterophilic interaction with CD177 plays a role in transendothelial migration of neutrophils. Homophilic ligation of PECAM1 prevents macrophage-mediated phagocytosis of neighboring viable leukocytes by transmitting a detachment signal. Promotes macrophage-mediated phagocytosis of apoptotic leukocytes by tethering them to the phagocytic cells; PECAM1-mediated detachment signal appears to be disabled in apoptotic leukocytes. Modulates bradykinin receptor BDKRB2 activation. Regulates bradykinin- and hyperosmotic shock-induced ERK1/2 activation in endothelial cells. Induces susceptibility to atherosclerosis. This is Platelet endothelial cell adhesion molecule (Pecam1) from Mus musculus (Mouse).